The primary structure comprises 127 residues: MRHYEICFIVHPDQSEQVPGMVERYRAIVTAKGGSIHRLEDWGRRQLAYPIQKIHKAHYVLMNIECDGDTLNELEHSFKFNDAVLRHLTVKMKAAVTTPSPMMKEEKSKSMMPGDAAPAAPAETAAA.

Residues 99–127 (PSPMMKEEKSKSMMPGDAAPAAPAETAAA) form a disordered region. A compositionally biased stretch (low complexity) spans 110–127 (SMMPGDAAPAAPAETAAA).

Belongs to the bacterial ribosomal protein bS6 family.

In terms of biological role, binds together with bS18 to 16S ribosomal RNA. The protein is Small ribosomal subunit protein bS6 of Dechloromonas aromatica (strain RCB).